The following is a 444-amino-acid chain: Phosphoglucosamine mutase (444 aa).

The active-site Phosphoserine intermediate is the S102. The Mg(2+) site is built by S102, D239, D241, and D243. S102 is modified (phosphoserine).

The protein belongs to the phosphohexose mutase family. Requires Mg(2+) as cofactor. Post-translationally, activated by phosphorylation.

The catalysed reaction is alpha-D-glucosamine 1-phosphate = D-glucosamine 6-phosphate. Catalyzes the conversion of glucosamine-6-phosphate to glucosamine-1-phosphate. The protein is Phosphoglucosamine mutase of Saccharopolyspora erythraea (strain ATCC 11635 / DSM 40517 / JCM 4748 / NBRC 13426 / NCIMB 8594 / NRRL 2338).